The following is a 357-amino-acid chain: tRNA N6-adenosine threonylcarbamoyltransferase (357 aa).

The Fe cation site is built by histidine 120 and histidine 124. Substrate is bound by residues 143-147, aspartate 176, glycine 189, and asparagine 289; that span reads LVSGG. Aspartate 317 contributes to the Fe cation binding site.

The protein belongs to the KAE1 / TsaD family. Requires Fe(2+) as cofactor.

The protein localises to the cytoplasm. The enzyme catalyses L-threonylcarbamoyladenylate + adenosine(37) in tRNA = N(6)-L-threonylcarbamoyladenosine(37) in tRNA + AMP + H(+). Its function is as follows. Required for the formation of a threonylcarbamoyl group on adenosine at position 37 (t(6)A37) in tRNAs that read codons beginning with adenine. Is involved in the transfer of the threonylcarbamoyl moiety of threonylcarbamoyl-AMP (TC-AMP) to the N6 group of A37, together with TsaE and TsaB. TsaD likely plays a direct catalytic role in this reaction. The protein is tRNA N6-adenosine threonylcarbamoyltransferase of Polynucleobacter asymbioticus (strain DSM 18221 / CIP 109841 / QLW-P1DMWA-1) (Polynucleobacter necessarius subsp. asymbioticus).